Consider the following 157-residue polypeptide: MRSILILLSLLLTIAFASASFPYQCGPYSCQFGQVCRIDNGVSNCIPINDCHEVSLSTKVVGTWVDGSRGNKRFTQYDITITNNLNTNIKQIYIATDYTLRLRDHSNNSIWNVNLLPNGILTLPSYQPSINAHASFTFGLIIEGTQPANLNVLSVSF.

Residues 1 to 19 form the signal peptide; it reads MRSILILLSLLLTIAFASA.

It localises to the secreted. In Dictyostelium discoideum (Social amoeba), this protein is Stalk-specific protein B (staB).